Consider the following 424-residue polypeptide: Serine--tRNA ligase (424 aa).

Thr-230–Glu-232 contributes to the L-serine binding site. Arg-261–Glu-263 contacts ATP. Position 284 (Glu-284) interacts with L-serine. An ATP-binding site is contributed by Glu-348–Ser-351. Ser-384 serves as a coordination point for L-serine.

The protein belongs to the class-II aminoacyl-tRNA synthetase family. Type-1 seryl-tRNA synthetase subfamily. As to quaternary structure, homodimer. The tRNA molecule binds across the dimer.

The protein resides in the cytoplasm. It catalyses the reaction tRNA(Ser) + L-serine + ATP = L-seryl-tRNA(Ser) + AMP + diphosphate + H(+). It carries out the reaction tRNA(Sec) + L-serine + ATP = L-seryl-tRNA(Sec) + AMP + diphosphate + H(+). It functions in the pathway aminoacyl-tRNA biosynthesis; selenocysteinyl-tRNA(Sec) biosynthesis; L-seryl-tRNA(Sec) from L-serine and tRNA(Sec): step 1/1. In terms of biological role, catalyzes the attachment of serine to tRNA(Ser). Is also able to aminoacylate tRNA(Sec) with serine, to form the misacylated tRNA L-seryl-tRNA(Sec), which will be further converted into selenocysteinyl-tRNA(Sec). This chain is Serine--tRNA ligase, found in Nitratidesulfovibrio vulgaris (strain ATCC 29579 / DSM 644 / CCUG 34227 / NCIMB 8303 / VKM B-1760 / Hildenborough) (Desulfovibrio vulgaris).